We begin with the raw amino-acid sequence, 169 residues long: Ribosome maturation factor RimM (169 aa).

Positions 94–168 constitute a PRC barrel domain; the sequence is DDEFYHADLI…RIVADPPEGL (75 aa).

This sequence belongs to the RimM family. In terms of assembly, binds ribosomal protein uS19.

The protein resides in the cytoplasm. Its function is as follows. An accessory protein needed during the final step in the assembly of 30S ribosomal subunit, possibly for assembly of the head region. Essential for efficient processing of 16S rRNA. May be needed both before and after RbfA during the maturation of 16S rRNA. It has affinity for free ribosomal 30S subunits but not for 70S ribosomes. The sequence is that of Ribosome maturation factor RimM from Cereibacter sphaeroides (strain ATCC 17023 / DSM 158 / JCM 6121 / CCUG 31486 / LMG 2827 / NBRC 12203 / NCIMB 8253 / ATH 2.4.1.) (Rhodobacter sphaeroides).